We begin with the raw amino-acid sequence, 379 residues long: MKSVGLITEYNPFHNGHQYHINQSKKLTNADVTIAIMSGNFVMRGEPAIYNKFTRAKMALSTADLVIELPATASLSSGDHFAELAVKVADYMSVDTIAFGSENNDIKTLKQLAHSINEIEQSESFSQKVKEGKSYPRIISELLEHHEALASPNNILGISYLKAIAKNAKNINAISIKRENAQHHDSLIQHHQFASGTSIRTSIISQDDHWHHVVPKDIQHLYVTPHITLNQIFPYLKYQIIAMTTDSLKNIYTVTEGFENRLKSNIYEATDFHHFVKLLKTKRYTYTHIQRLLMNVLLNIKPTDVTSNIHAVKVLAMNDRGRQYLKHLKTAFPERQYITNINKSNAHYFTNEIKATHIYNAISGQQQTDFNTPVIQQYR.

ATP is bound by residues 7–20 (ITEYNPFHNGHQYH), glycine 100, asparagine 153, and arginine 178.

The protein belongs to the TmcAL family.

Its subcellular location is the cytoplasm. It catalyses the reaction cytidine(34) in elongator tRNA(Met) + acetate + ATP = N(4)-acetylcytidine(34) in elongator tRNA(Met) + AMP + diphosphate. In terms of biological role, catalyzes the formation of N(4)-acetylcytidine (ac(4)C) at the wobble position of elongator tRNA(Met), using acetate and ATP as substrates. First activates an acetate ion to form acetyladenylate (Ac-AMP) and then transfers the acetyl group to tRNA to form ac(4)C34. This Staphylococcus aureus (strain Mu3 / ATCC 700698) protein is tRNA(Met) cytidine acetate ligase.